A 462-amino-acid chain; its full sequence is Argininosuccinate lyase (462 aa).

The protein belongs to the lyase 1 family. Argininosuccinate lyase subfamily.

It localises to the cytoplasm. The enzyme catalyses 2-(N(omega)-L-arginino)succinate = fumarate + L-arginine. It functions in the pathway amino-acid biosynthesis; L-arginine biosynthesis; L-arginine from L-ornithine and carbamoyl phosphate: step 3/3. This is Argininosuccinate lyase from Exiguobacterium sp. (strain ATCC BAA-1283 / AT1b).